Consider the following 156-residue polypeptide: Cyclic pyranopterin monophosphate synthase (156 aa).

Substrate is bound by residues 73 to 75 (LCH) and 110 to 111 (ME). The active site involves Asp-125.

The protein belongs to the MoaC family. Homohexamer; trimer of dimers.

It carries out the reaction (8S)-3',8-cyclo-7,8-dihydroguanosine 5'-triphosphate = cyclic pyranopterin phosphate + diphosphate. It participates in cofactor biosynthesis; molybdopterin biosynthesis. Catalyzes the conversion of (8S)-3',8-cyclo-7,8-dihydroguanosine 5'-triphosphate to cyclic pyranopterin monophosphate (cPMP). In Stutzerimonas stutzeri (strain A1501) (Pseudomonas stutzeri), this protein is Cyclic pyranopterin monophosphate synthase.